Reading from the N-terminus, the 178-residue chain is Nicotinamide-nucleotide adenylyltransferase (178 aa).

The protein belongs to the archaeal NMN adenylyltransferase family. As to quaternary structure, homohexamer.

The protein resides in the cytoplasm. The enzyme catalyses beta-nicotinamide D-ribonucleotide + ATP + H(+) = diphosphate + NAD(+). It functions in the pathway cofactor biosynthesis; NAD(+) biosynthesis; NAD(+) from nicotinamide D-ribonucleotide: step 1/1. This is Nicotinamide-nucleotide adenylyltransferase from Methanothermobacter thermautotrophicus (strain ATCC 29096 / DSM 1053 / JCM 10044 / NBRC 100330 / Delta H) (Methanobacterium thermoautotrophicum).